Here is a 488-residue protein sequence, read N- to C-terminus: Probable glycine dehydrogenase (decarboxylating) subunit 2 (488 aa).

Lys-273 bears the N6-(pyridoxal phosphate)lysine mark.

Belongs to the GcvP family. C-terminal subunit subfamily. As to quaternary structure, the glycine cleavage system is composed of four proteins: P, T, L and H. In this organism, the P 'protein' is a heterodimer of two subunits. Pyridoxal 5'-phosphate serves as cofactor.

The catalysed reaction is N(6)-[(R)-lipoyl]-L-lysyl-[glycine-cleavage complex H protein] + glycine + H(+) = N(6)-[(R)-S(8)-aminomethyldihydrolipoyl]-L-lysyl-[glycine-cleavage complex H protein] + CO2. Functionally, the glycine cleavage system catalyzes the degradation of glycine. The P protein binds the alpha-amino group of glycine through its pyridoxal phosphate cofactor; CO(2) is released and the remaining methylamine moiety is then transferred to the lipoamide cofactor of the H protein. This is Probable glycine dehydrogenase (decarboxylating) subunit 2 from Halalkalibacterium halodurans (strain ATCC BAA-125 / DSM 18197 / FERM 7344 / JCM 9153 / C-125) (Bacillus halodurans).